The following is a 115-amino-acid chain: uncharacterized protein (115 aa).

This is an uncharacterized protein from Homo sapiens (Human).